The chain runs to 446 residues: Tubulin beta-6 chain (446 aa).

Positions 11, 69, 138, 142, 143, 144, 204, and 226 each coordinate GTP. Residue Glu-69 coordinates Mg(2+). A disordered region spans residues 426 to 446 (QDATADEEEYEDEEEVQADDM). Positions 429 to 446 (TADEEEYEDEEEVQADDM) are enriched in acidic residues.

The protein belongs to the tubulin family. Dimer of alpha and beta chains. A typical microtubule is a hollow water-filled tube with an outer diameter of 25 nm and an inner diameter of 15 nM. Alpha-beta heterodimers associate head-to-tail to form protofilaments running lengthwise along the microtubule wall with the beta-tubulin subunit facing the microtubule plus end conferring a structural polarity. Microtubules usually have 13 protofilaments but different protofilament numbers can be found in some organisms and specialized cells. Mg(2+) serves as cofactor.

It is found in the cytoplasm. It localises to the cytoskeleton. Its function is as follows. Tubulin is the major constituent of microtubules, a cylinder consisting of laterally associated linear protofilaments composed of alpha- and beta-tubulin heterodimers. Microtubules grow by the addition of GTP-tubulin dimers to the microtubule end, where a stabilizing cap forms. Below the cap, tubulin dimers are in GDP-bound state, owing to GTPase activity of alpha-tubulin. The sequence is that of Tubulin beta-6 chain (TUBB6) from Zea mays (Maize).